A 407-amino-acid polypeptide reads, in one-letter code: Geranylgeranyl diphosphate reductase (407 aa).

It belongs to the geranylgeranyl reductase family. ChlP subfamily.

It carries out the reaction phytyl diphosphate + 3 NADP(+) = geranylgeranyl diphosphate + 3 NADPH + 3 H(+). Its pathway is porphyrin-containing compound metabolism; chlorophyll biosynthesis. Functionally, catalyzes the stepwise hydrogenation of geranylgeraniol to phytol during chlorophyll A (ChlA) biosynthesis. In Synechocystis sp. (strain ATCC 27184 / PCC 6803 / Kazusa), this protein is Geranylgeranyl diphosphate reductase (chlP).